We begin with the raw amino-acid sequence, 466 residues long: Cytochrome c-552 (466 aa).

The N-terminal stretch at 1-27 (MVRNLTKKSFALSALVAASLMASGVMA) is a signal peptide. His87 contributes to the heme c binding site. Positions 115, 118, and 119 each coordinate heme. Residues Cys153, Cys156, His157, Cys195, Cys198, and His199 each coordinate heme c. Ca(2+)-binding residues include Glu201, Tyr202, Lys250, and Gln252. Residue Tyr202 coordinates substrate. Residue His253 coordinates substrate. Residues His264, Cys271, Cys274, His275, His290, Cys303, Cys306, His307, and His382 each coordinate heme c.

The protein belongs to the cytochrome c-552 family. The cofactor is Ca(2+). Heme c is required as a cofactor.

The protein localises to the periplasm. The catalysed reaction is 6 Fe(III)-[cytochrome c] + NH4(+) + 2 H2O = 6 Fe(II)-[cytochrome c] + nitrite + 8 H(+). It functions in the pathway nitrogen metabolism; nitrate reduction (assimilation). Functionally, catalyzes the reduction of nitrite to ammonia, consuming six electrons in the process. The polypeptide is Cytochrome c-552 (Shewanella sediminis (strain HAW-EB3)).